The chain runs to 112 residues: UPF0060 membrane protein CMS0846 (112 aa).

Transmembrane regions (helical) follow at residues 6–26 (VILF…IWQA), 32–52 (PFWW…IATL), 61–81 (ILAA…TVVD), and 87–107 (RWDV…MAAP).

This sequence belongs to the UPF0060 family.

The protein localises to the cell membrane. The protein is UPF0060 membrane protein CMS0846 of Clavibacter sepedonicus (Clavibacter michiganensis subsp. sepedonicus).